A 191-amino-acid chain; its full sequence is General negative regulator of transcription subunit 2 (191 aa).

Belongs to the CNOT2/3/5 family. In terms of assembly, forms a NOT protein complex that comprises NOT1, NOT2, NOT3, NOT4 and NOT5. Subunit of the 1.0 MDa CCR4-NOT core complex that contains CCR4, CAF1, NOT1, NOT2, NOT3, NOT4, NOT5, CAF40 and CAF130. In the complex interacts with NOT1 and NOT5. The core complex probably is part of a less characterized 1.9 MDa CCR4-NOT complex.

Its subcellular location is the cytoplasm. It is found in the nucleus. In terms of biological role, acts as a component of the CCR4-NOT core complex, which in the nucleus seems to be a general transcription factor, and in the cytoplasm the major mRNA deadenylase involved in mRNA turnover. NOT2 is required for the integrity of the complex. The NOT protein subcomplex negatively regulates the basal and activated transcription of many genes. Preferentially affects TC-type TATA element-dependent transcription. Could directly or indirectly inhibit component(s) of the general transcription machinery. The polypeptide is General negative regulator of transcription subunit 2 (CDC36) (Saccharomyces cerevisiae (strain ATCC 204508 / S288c) (Baker's yeast)).